The primary structure comprises 150 residues: Macrodomain Ter protein (150 aa).

Belongs to the MatP family. In terms of assembly, homodimer.

Its subcellular location is the cytoplasm. Its function is as follows. Required for spatial organization of the terminus region of the chromosome (Ter macrodomain) during the cell cycle. Prevents early segregation of duplicated Ter macrodomains during cell division. Binds specifically to matS, which is a 13 bp signature motif repeated within the Ter macrodomain. This chain is Macrodomain Ter protein, found in Escherichia coli (strain SMS-3-5 / SECEC).